The following is a 443-amino-acid chain: MIQQDPGALYSDHLAVLFRRAEQALARGGFDHLVVPSGTLHYQVFDDRDYPYAVNPQFKAWLPLTRVPNSWIVFTPGKRPAVLFHQPFDYWHVVPDAPSGWWVEHFDIHIIRKPEEALALLPADPSRCAILGEPQSALGSYVPNNPAPVVNYLEWHRGSKTPYEIALMRQAQVLGVRGHRAAEAAFRNGADEFSIHMAYCQAVGQDATELPYGNIVALNEHAAVLHYTELGRKAPQPLRSFLIDAGASAHGYASDITRTYAARGHDEFAAMIAAVDAAQQQMCAAVRPGFDYKQLHVDAHLSLMGVLKDFGVIKVSPQTALETGVSAAFFPHGIGHLIGLQVHDVAGFAASDEGGRIERPAGHPYLRLTRVLEPGMVVTIEPGLYFIDMLLNEVKDAGHGDAINWDRVDFFRPYGGIRIEDEVLCTEGEADNLTRPVFAAANG.

Mn(2+)-binding residues include Asp-244, Asp-255, His-336, Glu-381, and Glu-420.

This sequence belongs to the peptidase M24B family. Bacterial-type prolidase subfamily. Requires Mn(2+) as cofactor.

The enzyme catalyses Xaa-L-Pro dipeptide + H2O = an L-alpha-amino acid + L-proline. Functionally, splits dipeptides with a prolyl residue in the C-terminal position. The protein is Xaa-Pro dipeptidase of Stenotrophomonas maltophilia (strain R551-3).